A 398-amino-acid chain; its full sequence is Pentalenolactone synthase (398 aa).

Cys347 lines the heme pocket.

Belongs to the cytochrome P450 family. Heme serves as cofactor.

It catalyses the reaction pentalenolactone F + 2 reduced [2Fe-2S]-[ferredoxin] + O2 + 2 H(+) = pentalenolactone + 2 oxidized [2Fe-2S]-[ferredoxin] + 2 H2O. It participates in antibiotic biosynthesis; pentalenolactone biosynthesis. Its function is as follows. Catalyzes the final step in the biosynthesis of the sesquiterpenoid antibiotic pentalenolactone by mediating the oxidative rearrangement of pentalenolactone F to pentalenolactone. The polypeptide is Pentalenolactone synthase (penM) (Streptomyces exfoliatus (Streptomyces hydrogenans)).